Consider the following 251-residue polypeptide: MTEQKITFADQKRKTVEIAEFTEDGRYKRKVRSFVLRTGRLSEFQRNMMNNNWATLGLEYQTTAFDFTQIYGNTNPVILEIGFGMGKSLVEMALQNPDKNYLGIEVHTPGVGACIAYAVEKQVKNLRVICHDATEILQDCIADNSLAGLQLFFPDPWHKTKHHKRRIVQPHFVEKIQQKLVPNGFVHMATDWENYAEYMLEVLTSAVGLRNTSATNDYIPRPDFRPLTKFEQRGHKLGHGVWDLFFIKNIT.

Residues Glu-80, Glu-105, Asp-132, and Asp-155 each coordinate S-adenosyl-L-methionine. Asp-155 is a catalytic residue. Substrate contacts are provided by residues Lys-159, Asp-191, and 228 to 231 (TKFE).

This sequence belongs to the class I-like SAM-binding methyltransferase superfamily. TrmB family.

The catalysed reaction is guanosine(46) in tRNA + S-adenosyl-L-methionine = N(7)-methylguanosine(46) in tRNA + S-adenosyl-L-homocysteine. It functions in the pathway tRNA modification; N(7)-methylguanine-tRNA biosynthesis. Its function is as follows. Catalyzes the formation of N(7)-methylguanine at position 46 (m7G46) in tRNA. This chain is tRNA (guanine-N(7)-)-methyltransferase, found in Histophilus somni (strain 129Pt) (Haemophilus somnus).